The primary structure comprises 301 residues: MTVIMDGKKLAELRLVETKNDLLALKDKYQITVKLVIILVGNNDASLIYVNNKVAKAKAIGMDSEIIRLFEFIEEKKLLSVIDDLNCDSTVHGIIVQLPLPPHIDALKIFARIDSRKDVDGLNPINIGYLNIGANHGLIPCTALGCIDLLQYYVTDLKGKHVVVIGKSNIVGKPLSALLLRHSCTVTICHSATVDLALHTRTADIVISAVGKANFLTNKHFSGNLAFIDVGISHIYDLQTHKRKLVGDGDFLKIKDLVKFITPVPGGVGPMTVAYLLKNTLTAAKLIYASIIDNDDEKHLC.

NADP(+) is bound by residues 166–168, Ser191, and Ile232; that span reads GKS.

It belongs to the tetrahydrofolate dehydrogenase/cyclohydrolase family. Homodimer.

The enzyme catalyses (6R)-5,10-methylene-5,6,7,8-tetrahydrofolate + NADP(+) = (6R)-5,10-methenyltetrahydrofolate + NADPH. It catalyses the reaction (6R)-5,10-methenyltetrahydrofolate + H2O = (6R)-10-formyltetrahydrofolate + H(+). The protein operates within one-carbon metabolism; tetrahydrofolate interconversion. Catalyzes the oxidation of 5,10-methylenetetrahydrofolate to 5,10-methenyltetrahydrofolate and then the hydrolysis of 5,10-methenyltetrahydrofolate to 10-formyltetrahydrofolate. This chain is Bifunctional protein FolD, found in Orientia tsutsugamushi (strain Ikeda) (Rickettsia tsutsugamushi).